We begin with the raw amino-acid sequence, 145 residues long: Protein SprT-like (145 aa).

The SprT-like domain maps to 5–140; that stretch reads DYVREVSLAD…ACGRCHGRLI (136 aa). H64 contributes to the Zn(2+) binding site. The active site involves E65. H68 provides a ligand contact to Zn(2+).

This sequence belongs to the SprT family. Zn(2+) is required as a cofactor.

Its subcellular location is the cytoplasm. In Streptococcus equi subsp. zooepidemicus (strain MGCS10565), this protein is Protein SprT-like.